We begin with the raw amino-acid sequence, 114 residues long: uncharacterized protein (114 aa).

This is an uncharacterized protein from Human cytomegalovirus (strain AD169) (HHV-5).